We begin with the raw amino-acid sequence, 268 residues long: Tryptophan synthase alpha chain (268 aa).

Catalysis depends on proton acceptor residues glutamate 49 and aspartate 60.

It belongs to the TrpA family. In terms of assembly, tetramer of two alpha and two beta chains.

It catalyses the reaction (1S,2R)-1-C-(indol-3-yl)glycerol 3-phosphate + L-serine = D-glyceraldehyde 3-phosphate + L-tryptophan + H2O. The protein operates within amino-acid biosynthesis; L-tryptophan biosynthesis; L-tryptophan from chorismate: step 5/5. Its function is as follows. The alpha subunit is responsible for the aldol cleavage of indoleglycerol phosphate to indole and glyceraldehyde 3-phosphate. In Shigella boydii serotype 18 (strain CDC 3083-94 / BS512), this protein is Tryptophan synthase alpha chain.